Here is a 98-residue protein sequence, read N- to C-terminus: Bombyxin A-3 homolog (98 aa).

An N-terminal signal peptide occupies residues 1–18 (MRTQVLFLVLEVAAMASG). Intrachain disulfides connect C26–C85, C38–C98, and C84–C89. The propeptide at 47–75 (TPYTSSESEGYGWRWLAPQRARQLAGARG) is c peptide like.

It belongs to the insulin family. Heterodimer of a B chain and an A chain linked by two disulfide bonds.

It is found in the secreted. Brain peptide responsible for activation of prothoracic glands to produce ecdysone in insects. In Samia cynthia (Ailanthus silkmoth), this protein is Bombyxin A-3 homolog (SBXA3).